Reading from the N-terminus, the 174-residue chain is Superoxide dismutase [Cu-Zn] (174 aa).

The N-terminal stretch at 1–23 (MIRLSAAAALGLAAALAASPALA) is a signal peptide. Cu cation contacts are provided by histidine 68, histidine 70, and histidine 86. A disulfide bond links cysteine 75 and cysteine 170. Zn(2+) is bound by residues histidine 86, histidine 95, aspartate 104, and aspartate 107. Histidine 150 lines the Cu cation pocket.

The protein belongs to the Cu-Zn superoxide dismutase family. As to quaternary structure, homodimer. It depends on Cu cation as a cofactor. Zn(2+) is required as a cofactor.

The protein resides in the periplasm. The enzyme catalyses 2 superoxide + 2 H(+) = H2O2 + O2. Its function is as follows. Destroys radicals which are normally produced within the cells and which are toxic to biological systems. May function against extracytoplasmic toxic oxygen species. The chain is Superoxide dismutase [Cu-Zn] (sodC) from Caulobacter vibrioides (strain ATCC 19089 / CIP 103742 / CB 15) (Caulobacter crescentus).